The chain runs to 400 residues: MAFLSDTLARVKPSQTIAVTNKARELAAAGRDVIGLGAGEPDFDTPDNIKAAAKRAIDAGRTKYTAVDGIPELKRAICEKFERENGLKYTPAQVTVGTGGKQILYNALVATLNPGDEVIIPAPYWVSYPDMVLLAGGTPVSVAAGMETGFKLTPEQLEAAITPRTKWFIFNSPSNPTGAAYTRAELAALCEVLMRHPQVWIMSDDMYEHLVFDDFDFTTPAQIEPGLYDRTLTCNGVSKAYCMTGWRIGYAAGPVELIRAMGTIQSQSTSNPCSIAQYAALEALSGPQEFLATNREAFQRRRDLVVSMLNEAKGVTCPNPEGAFYVYPDISGCIGKTSAGGAKITDDEAFASALLEETGVAVVFGAAFGLSPNFRISYATADEVLREACARIQAFCAGLS.

Positions 39, 125, and 175 each coordinate L-aspartate. Lys-239 is subject to N6-(pyridoxal phosphate)lysine. L-aspartate is bound at residue Arg-375.

The protein belongs to the class-I pyridoxal-phosphate-dependent aminotransferase family. Homodimer. The cofactor is pyridoxal 5'-phosphate.

It localises to the cytoplasm. It catalyses the reaction L-aspartate + 2-oxoglutarate = oxaloacetate + L-glutamate. The catalysed reaction is L-arogenate + 2-oxoglutarate = prephenate + L-glutamate. Its function is as follows. Catalyzes the reversible conversion of aspartate and 2-oxoglutarate to glutamate and oxaloacetate. Can also transaminate prephenate in the presence of glutamate. The sequence is that of Aspartate/prephenate aminotransferase from Cereibacter sphaeroides (strain ATCC 17029 / ATH 2.4.9) (Rhodobacter sphaeroides).